The following is a 513-amino-acid chain: MEDKEIGTPLPLPHSEARLQPTLVLTTLSAAFGSVFQYGYNIAVINTPHKVFKSFYNDTHFERHGTFMDESTLLLLWSCTVSMFPLGGLLGSLVVGLMVNKWGRKGTLLINNVFAITSAVLMGVSKVARAFELIILSRVLVGICAGIAYSTLPMYLGELAPQNLRGALGTMTEVFVIIGVLLAQIFSLQAILGNATGWPILLALTGVPAVIQLLSLPFFPESPRYTLIEKGDEETARQALRRLRGQNYNVEAEMEEMRTEERTEQAEGRLSVLNLFTFRPLRWQLISIVVLMAGQQLSGINAVNYYADVIYTSAGVDPTQSQYVTLGSGVINLVMTLVSAVIIERLGRRILLLSGYAICCSACLVLTVALLLQSTAPELSYLSIVCVFSYIVGHSIGPSPVPSVVRTEIVLQSSRTAAFTVDGAVHWLTNFIVGLTFPSIQVAIGAYSFLVFAGVCILTAAYIYVVIPETKGRTFVEINCAFAKRNGVEFPEEKEVATAKPHTPSLPTKETAF.

The Cytoplasmic segment spans residues 1–21; it reads MEDKEIGTPLPLPHSEARLQP. The helical transmembrane segment at 22–42 threads the bilayer; it reads TLVLTTLSAAFGSVFQYGYNI. The Extracellular portion of the chain corresponds to 43–78; sequence AVINTPHKVFKSFYNDTHFERHGTFMDESTLLLLWS. N57 carries an N-linked (GlcNAc...) asparagine glycan. The helical transmembrane segment at 79 to 99 threads the bilayer; sequence CTVSMFPLGGLLGSLVVGLMV. The Cytoplasmic portion of the chain corresponds to 100–107; sequence NKWGRKGT. Residues 108-128 form a helical membrane-spanning segment; the sequence is LLINNVFAITSAVLMGVSKVA. The Extracellular portion of the chain corresponds to 129-138; sequence RAFELIILSR. A helical transmembrane segment spans residues 139–159; sequence VLVGICAGIAYSTLPMYLGEL. Topologically, residues 160–172 are cytoplasmic; it reads APQNLRGALGTMT. Residues 173-193 form a helical membrane-spanning segment; the sequence is EVFVIIGVLLAQIFSLQAILG. Residues 194 to 198 are Extracellular-facing; the sequence is NATGW. Residues 199–219 form a helical membrane-spanning segment; it reads PILLALTGVPAVIQLLSLPFF. Residues 220-282 lie on the Cytoplasmic side of the membrane; sequence PESPRYTLIE…LNLFTFRPLR (63 aa). Residues 283 to 303 form a helical membrane-spanning segment; that stretch reads WQLISIVVLMAGQQLSGINAV. Residues 295–296 and N301 each bind D-glucose; that span reads QQ. Residues 304–322 are Extracellular-facing; sequence NYYADVIYTSAGVDPTQSQ. Residues 323 to 343 traverse the membrane as a helical segment; the sequence is YVTLGSGVINLVMTLVSAVII. Residue N332 coordinates D-glucose. Topologically, residues 344–351 are cytoplasmic; the sequence is ERLGRRIL. Residues 352–372 form a helical membrane-spanning segment; it reads LLSGYAICCSACLVLTVALLL. Over 373–380 the chain is Extracellular; that stretch reads QSTAPELS. The helical transmembrane segment at 381–401 threads the bilayer; the sequence is YLSIVCVFSYIVGHSIGPSPV. Residues 402 to 416 are Cytoplasmic-facing; sequence PSVVRTEIVLQSSRT. A helical membrane pass occupies residues 417-437; it reads AAFTVDGAVHWLTNFIVGLTF. Residues 438-446 lie on the Extracellular side of the membrane; it reads PSIQVAIGA. A helical transmembrane segment spans residues 447–467; that stretch reads YSFLVFAGVCILTAAYIYVVI. Residues 468–513 are Cytoplasmic-facing; the sequence is PETKGRTFVEINCAFAKRNGVEFPEEKEVATAKPHTPSLPTKETAF. The tract at residues 494–513 is disordered; sequence KEVATAKPHTPSLPTKETAF.

It belongs to the major facilitator superfamily. Sugar transporter (TC 2.A.1.1) family. Glucose transporter subfamily.

Its subcellular location is the cell membrane. It localises to the apical cell membrane. The enzyme catalyses D-glucose(out) = D-glucose(in). It carries out the reaction D-fructose(out) = D-fructose(in). In terms of biological role, probable sugar transporter. Even if its physiological substrate is subject to discussion, it is able to transport glucose and fructose. Does not transport galactose, 2-deoxy-d-glucose and xylose. The polypeptide is Solute carrier family 2, facilitated glucose transporter member 7 (Mus musculus (Mouse)).